The chain runs to 350 residues: Anthranilate phosphoribosyltransferase (350 aa).

5-phospho-alpha-D-ribose 1-diphosphate is bound by residues Gly94, 97–98 (GD), Thr102, 104–107 (NVST), 122–130 (KHGNRSVSS), and Ser134. Position 94 (Gly94) interacts with anthranilate. A Mg(2+)-binding site is contributed by Ser106. Asn125 is an anthranilate binding site. Residue Arg180 coordinates anthranilate. Mg(2+) is bound by residues Asp239 and Glu240.

The protein belongs to the anthranilate phosphoribosyltransferase family. As to quaternary structure, homodimer. Mg(2+) serves as cofactor.

The enzyme catalyses N-(5-phospho-beta-D-ribosyl)anthranilate + diphosphate = 5-phospho-alpha-D-ribose 1-diphosphate + anthranilate. The protein operates within amino-acid biosynthesis; L-tryptophan biosynthesis; L-tryptophan from chorismate: step 2/5. Catalyzes the transfer of the phosphoribosyl group of 5-phosphorylribose-1-pyrophosphate (PRPP) to anthranilate to yield N-(5'-phosphoribosyl)-anthranilate (PRA). This Pelobacter propionicus (strain DSM 2379 / NBRC 103807 / OttBd1) protein is Anthranilate phosphoribosyltransferase.